Consider the following 325-residue polypeptide: Probable arylamine N-acetyltransferase 1 (325 aa).

The Acyl-thioester intermediate role is filled by cysteine 72. Residues histidine 112 and aspartate 127 contribute to the active site.

The protein belongs to the arylamine N-acetyltransferase family.

The catalysed reaction is an arylamine + acetyl-CoA = an N-acetylarylamine + CoA. In Dictyostelium discoideum (Social amoeba), this protein is Probable arylamine N-acetyltransferase 1.